The primary structure comprises 212 residues: 2-phospho-L-lactate guanylyltransferase (212 aa).

Belongs to the CofC family. In terms of assembly, homodimer.

The catalysed reaction is (2S)-2-phospholactate + GTP + H(+) = (2S)-lactyl-2-diphospho-5'-guanosine + diphosphate. The protein operates within cofactor biosynthesis; coenzyme F420 biosynthesis. Its function is as follows. Guanylyltransferase that catalyzes the activation of (2S)-2-phospholactate (2-PL) as (2S)-lactyl-2-diphospho-5'-guanosine, via the condensation of 2-PL with GTP. It is involved in the biosynthesis of coenzyme F420, a hydride carrier cofactor. The sequence is that of 2-phospho-L-lactate guanylyltransferase from Methanocorpusculum labreanum (strain ATCC 43576 / DSM 4855 / Z).